The chain runs to 83 residues: Large ribosomal subunit protein bL31 (83 aa).

It belongs to the bacterial ribosomal protein bL31 family. Type A subfamily. Part of the 50S ribosomal subunit.

Its function is as follows. Binds the 23S rRNA. This Gloeothece citriformis (strain PCC 7424) (Cyanothece sp. (strain PCC 7424)) protein is Large ribosomal subunit protein bL31.